Here is a 117-residue protein sequence, read N- to C-terminus: MMAEAKKAAPKKAATAASKDADAKGPKHTPPNPKVRGRRKTRIGYVVSDKMQKTIVVELEDRVKHPLYGKIIRTTKKVKAHDENSIAGIGDRVSLMETRPTSATKRWRLVEILEKAK.

Residues 1–42 (MMAEAKKAAPKKAATAASKDADAKGPKHTPPNPKVRGRRKTR) form a disordered region.

It belongs to the universal ribosomal protein uS17 family. As to quaternary structure, part of the 30S ribosomal subunit.

Functionally, one of the primary rRNA binding proteins, it binds specifically to the 5'-end of 16S ribosomal RNA. This chain is Small ribosomal subunit protein uS17, found in Mycolicibacterium paratuberculosis (strain ATCC BAA-968 / K-10) (Mycobacterium paratuberculosis).